The following is a 168-amino-acid chain: Transcription antitermination protein NusB (168 aa).

A disordered region spans residues 147 to 168 (RGLINNSSRNTSRSEEKHSTEK). A compositionally biased stretch (basic and acidic residues) spans 158 to 168 (SRSEEKHSTEK).

The protein belongs to the NusB family.

Functionally, involved in transcription antitermination. Required for transcription of ribosomal RNA (rRNA) genes. Binds specifically to the boxA antiterminator sequence of the ribosomal RNA (rrn) operons. In Chlorobium phaeobacteroides (strain BS1), this protein is Transcription antitermination protein NusB.